Consider the following 565-residue polypeptide: CTP synthase (565 aa).

The amidoligase domain stretch occupies residues 1-272 (MARPKNVKHI…DLRVMKKLGL (272 aa)). Residue Ser-18 coordinates CTP. Ser-18 contributes to the UTP binding site. An ATP-binding site is contributed by 19-24 (SLGKGI). Position 59 (Tyr-59) interacts with L-glutamine. Asp-76 serves as a coordination point for ATP. Asp-76 and Glu-146 together coordinate Mg(2+). Residues 153 to 155 (DIE), 193 to 198 (KTKPTQ), and Lys-229 each bind CTP. UTP contacts are provided by residues 193–198 (KTKPTQ) and Lys-229. The 245-residue stretch at 299-543 (TIGICGKYTE…VHAAKEFAQG (245 aa)) folds into the Glutamine amidotransferase type-1 domain. Gly-363 serves as a coordination point for L-glutamine. Cys-390 functions as the Nucleophile; for glutamine hydrolysis in the catalytic mechanism. Residues 391–394 (LGMQ), Glu-414, and Arg-471 contribute to the L-glutamine site. Residues His-516 and Glu-518 contribute to the active site.

It belongs to the CTP synthase family. As to quaternary structure, homotetramer.

It carries out the reaction UTP + L-glutamine + ATP + H2O = CTP + L-glutamate + ADP + phosphate + 2 H(+). The catalysed reaction is L-glutamine + H2O = L-glutamate + NH4(+). It catalyses the reaction UTP + NH4(+) + ATP = CTP + ADP + phosphate + 2 H(+). It participates in pyrimidine metabolism; CTP biosynthesis via de novo pathway; CTP from UDP: step 2/2. Allosterically activated by GTP, when glutamine is the substrate; GTP has no effect on the reaction when ammonia is the substrate. The allosteric effector GTP functions by stabilizing the protein conformation that binds the tetrahedral intermediate(s) formed during glutamine hydrolysis. Inhibited by the product CTP, via allosteric rather than competitive inhibition. In terms of biological role, catalyzes the ATP-dependent amination of UTP to CTP with either L-glutamine or ammonia as the source of nitrogen. Regulates intracellular CTP levels through interactions with the four ribonucleotide triphosphates. This chain is CTP synthase, found in Chlorobaculum tepidum (strain ATCC 49652 / DSM 12025 / NBRC 103806 / TLS) (Chlorobium tepidum).